The sequence spans 199 residues: N-(5'-phosphoribosyl)anthranilate isomerase (199 aa).

The protein belongs to the TrpF family.

The enzyme catalyses N-(5-phospho-beta-D-ribosyl)anthranilate = 1-(2-carboxyphenylamino)-1-deoxy-D-ribulose 5-phosphate. The protein operates within amino-acid biosynthesis; L-tryptophan biosynthesis; L-tryptophan from chorismate: step 3/5. The chain is N-(5'-phosphoribosyl)anthranilate isomerase from Streptococcus pneumoniae (strain Hungary19A-6).